The sequence spans 447 residues: ATP-dependent 6-phosphofructokinase (447 aa).

ATP contacts are provided by residues G88, 154 to 155 (RG), and 179 to 182 (GDGT). D180 provides a ligand contact to Mg(2+). Residues 208–210 (TVD), 253–255 (MGR), E315, and 368–371 (YIIR) contribute to the substrate site. D210 serves as the catalytic Proton acceptor.

The protein belongs to the phosphofructokinase type A (PFKA) family. PPi-dependent PFK group II subfamily. Atypical ATP-dependent clade 'X' sub-subfamily. In terms of assembly, homodimer. The cofactor is Mg(2+).

Its subcellular location is the cytoplasm. It carries out the reaction beta-D-fructose 6-phosphate + ATP = beta-D-fructose 1,6-bisphosphate + ADP + H(+). The protein operates within carbohydrate degradation; glycolysis; D-glyceraldehyde 3-phosphate and glycerone phosphate from D-glucose: step 3/4. Functionally, catalyzes the phosphorylation of D-fructose 6-phosphate to fructose 1,6-bisphosphate by ATP, the first committing step of glycolysis. The protein is ATP-dependent 6-phosphofructokinase of Borreliella burgdorferi (strain ATCC 35210 / DSM 4680 / CIP 102532 / B31) (Borrelia burgdorferi).